We begin with the raw amino-acid sequence, 335 residues long: Aspartate--ammonia ligase (335 aa).

It belongs to the class-II aminoacyl-tRNA synthetase family. AsnA subfamily.

Its subcellular location is the cytoplasm. It catalyses the reaction L-aspartate + NH4(+) + ATP = L-asparagine + AMP + diphosphate + H(+). It functions in the pathway amino-acid biosynthesis; L-asparagine biosynthesis; L-asparagine from L-aspartate (ammonia route): step 1/1. In Pediococcus pentosaceus (strain ATCC 25745 / CCUG 21536 / LMG 10740 / 183-1w), this protein is Aspartate--ammonia ligase.